Reading from the N-terminus, the 540-residue chain is Chaperonin GroEL (540 aa).

Residues 29 to 32 (TIGP), 86 to 90 (DGTTT), Gly413, 476 to 478 (NAA), and Asp492 each bind ATP. The disordered stretch occupies residues 520-540 (DKPEPESNNQMPATPGMGGMM).

It belongs to the chaperonin (HSP60) family. Forms a cylinder of 14 subunits composed of two heptameric rings stacked back-to-back. Interacts with the co-chaperonin GroES.

It localises to the cytoplasm. The enzyme catalyses ATP + H2O + a folded polypeptide = ADP + phosphate + an unfolded polypeptide.. Functionally, together with its co-chaperonin GroES, plays an essential role in assisting protein folding. The GroEL-GroES system forms a nano-cage that allows encapsulation of the non-native substrate proteins and provides a physical environment optimized to promote and accelerate protein folding. This chain is Chaperonin GroEL, found in Ligilactobacillus salivarius (strain UCC118) (Lactobacillus salivarius).